Consider the following 619-residue polypeptide: Lateral signaling target protein 2 homolog (619 aa).

The FYVE-type zinc-finger motif lies at 501–561 (DSDCEQCTAC…VCNLCFLYKI (61 aa)). 8 residues coordinate Zn(2+): cysteine 507, cysteine 510, cysteine 523, cysteine 526, cysteine 531, cysteine 534, cysteine 553, and cysteine 556. Residues 598–619 (HERSQDGSQSNESPTATTATTI) form a disordered region. A compositionally biased stretch (polar residues) spans 603-619 (DGSQSNESPTATTATTI).

This sequence belongs to the lst-2 family.

Its function is as follows. Negative regulator of epidermal growth factor receptor (EGFR) signaling. This Brugia malayi (Filarial nematode worm) protein is Lateral signaling target protein 2 homolog.